The primary structure comprises 1046 residues: FERM, ARHGEF and pleckstrin domain-containing protein 1 (1046 aa).

The region spanning 40-320 is the FERM domain; sequence ISIKIQMLDD…EHHAFFRLFE (281 aa). A disordered region spans residues 374–522; the sequence is LTAQPSEQHA…LISPLLNDPS (149 aa). Basic and acidic residues predominate over residues 413-424; that stretch reads KELKASTEDTGQ. The span at 458-513 shows a compositional bias: polar residues; the sequence is RMQQNRPQSQQPSTAGSLTGSPHLSELSINSQGGPSVANMSLSPNLSPDAKQSSPL. The region spanning 541–732 is the DH domain; it reads KAYFIAKEVA…TEMMAQLHGN (192 aa). The 98-residue stretch at 761–858 folds into the PH 1 domain; that stretch reads EFIRLGSLSK…WIEDIQMAID (98 aa). A disordered region spans residues 864–907; it reads SDPVPELLASSPPDNKSPDETTVDQESEDDLSASRTSLERQSPH. Residues 884-894 show a composition bias toward acidic residues; that stretch reads TTVDQESEDDL. Residues 933-1030 form the PH 2 domain; the sequence is ENQLSGNLLR…WMEVIRSATS (98 aa).

Interacts with PLXNA4. In terms of tissue distribution, detected in lateral motor column motor neurons and in preganglionic autonomic motor neurons of the column of Terni in the embryonic spinal cord (at protein level).

Its subcellular location is the cell membrane. The protein localises to the synapse. The protein resides in the synaptosome. It localises to the cytoplasm. It is found in the cytosol. Its subcellular location is the cell projection. The protein localises to the filopodium. The protein resides in the dendrite. It localises to the dendritic spine. Functions as a guanine nucleotide exchange factor for RAC1. Plays a role in semaphorin signaling via its interaction with PLXNA4. Plays a role in the assembly and disassembly of dendritic filopodia, the formation of dendritic spines, regulation of dendrite length and ultimately the formation of synapses. The chain is FERM, ARHGEF and pleckstrin domain-containing protein 1 (FARP1) from Gallus gallus (Chicken).